Consider the following 357-residue polypeptide: Ribosomal RNA large subunit methyltransferase M (357 aa).

S-adenosyl-L-methionine-binding positions include serine 183, 216–219, aspartate 235, aspartate 255, and aspartate 271; that span reads APGG. Lysine 300 acts as the Proton acceptor in catalysis.

Belongs to the class I-like SAM-binding methyltransferase superfamily. RNA methyltransferase RlmE family. RlmM subfamily. Monomer.

It is found in the cytoplasm. It carries out the reaction cytidine(2498) in 23S rRNA + S-adenosyl-L-methionine = 2'-O-methylcytidine(2498) in 23S rRNA + S-adenosyl-L-homocysteine + H(+). In terms of biological role, catalyzes the 2'-O-methylation at nucleotide C2498 in 23S rRNA. This chain is Ribosomal RNA large subunit methyltransferase M, found in Pseudomonas fluorescens (strain ATCC BAA-477 / NRRL B-23932 / Pf-5).